A 379-amino-acid polypeptide reads, in one-letter code: D-threonine aldolase (379 aa).

The residue at position 59 (Lys59) is an N6-(pyridoxal phosphate)lysine.

It belongs to the DSD1 family. It depends on pyridoxal 5'-phosphate as a cofactor. The cofactor is Mn(2+). Co(2+) serves as cofactor. Requires Ni(2+) as cofactor. Mg(2+) is required as a cofactor.

The catalysed reaction is D-threonine = acetaldehyde + glycine. The enzyme catalyses D-allo-threonine = acetaldehyde + glycine. Inhibited by the carbonyl reagents hydroxylamine, phenylhydrazine and semicarbazide. Inhibited by the chelating agent EDTA. Inhibited by the sulfhydryl reagent p-chloromercuribenzoic acid, and by sodium cyanide. Inhibited by iodoacetate, Ag(2)SO(4), HgCl(2) and CdCl(2). Competitively inhibited by beta-hydroxyaspartate and O-phospho-DL-threonine. Catalyzes the reversible cleavage of D-threonine or D-allothreonine into glycine and acetaldehyde. Can also cleave D-beta-phenylserine, D-beta-hydroxy-alpha-aminovaleric acid, D-beta-3,4-dihydroxyphenylserine and D-beta-3,4-methylenedioxyphenylserine into glycine and the corresponding aldehyde compounds. Inactive towards D-serine, beta-hydroxyaspartate and O-phospho-DL-threonine. This is D-threonine aldolase from Arthrobacter sp.